Here is a 619-residue protein sequence, read N- to C-terminus: Very-long-chain aldehyde decarbonylase GL1-4 (619 aa).

5 consecutive transmembrane segments (helical) span residues 45-65 (IAFSLILPSLLLRMIHNQIWI), 94-114 (GWDDQILFNGLVFYAGYLAMP), 126-146 (GAVVTALVHTGPVEFLYYWFH), 178-198 (FAEHVVYFILFAIPILSTIYL), and 325-345 (AWYMWTLWPLAWLSMVLAWIY). Residues 138-272 (VEFLYYWFHR…MPFYDYIYNT (135 aa)) enclose the Fatty acid hydroxylase domain.

Belongs to the sterol desaturase family. As to quaternary structure, homodimer.

Its subcellular location is the endoplasmic reticulum membrane. The catalysed reaction is a long-chain fatty aldehyde + 2 NADPH + O2 + H(+) = a long-chain alkane + formate + 2 NADP(+) + H2O. Aldehyde decarbonylase involved in the conversion of aldehydes to alkanes. Core component of a very-long-chain alkane synthesis complex. In Oryza sativa subsp. indica (Rice), this protein is Very-long-chain aldehyde decarbonylase GL1-4.